Consider the following 329-residue polypeptide: Trans-1,2-dihydrobenzene-1,2-diol dehydrogenase (329 aa).

The protein belongs to the Gfo/Idh/MocA family. As to quaternary structure, homodimer. In terms of tissue distribution, lens, liver and small intestine.

The enzyme catalyses (1R,2R)-1,2-dihydrobenzene-1,2-diol + NADP(+) = catechol + NADPH + H(+). It carries out the reaction D-xylose + NADP(+) = D-xylono-1,5-lactone + NADPH + H(+). Stimulated by various salts. The protein is Trans-1,2-dihydrobenzene-1,2-diol dehydrogenase (DHDH) of Oryctolagus cuniculus (Rabbit).